Reading from the N-terminus, the 479-residue chain is Sodium-coupled neutral amino acid transporter 5 (479 aa).

The Cytoplasmic segment spans residues methionine 1 to glycine 61. The chain crosses the membrane as a helical span at residues methionine 62–alanine 84. Over histidine 85–cysteine 97 the chain is Extracellular. The helical transmembrane segment at isoleucine 98 to isoleucine 118 threads the bilayer. Residues arginine 119 to valine 135 are Cytoplasmic-facing. Residues valine 136–isoleucine 156 traverse the membrane as a helical segment. Topologically, residues lysine 157–tryptophan 176 are extracellular. The chain crosses the membrane as a helical span at residues phenylalanine 177 to leucine 197. Residues methionine 198–glycine 202 lie on the Cytoplasmic side of the membrane. Residues tyrosine 203 to isoleucine 223 traverse the membrane as a helical segment. The Extracellular portion of the chain corresponds to tyrosine 224–glutamine 264. Cysteines 231 and 254 form a disulfide. Asparagine 236 carries an N-linked (GlcNAc...) asparagine glycan. Residues methionine 265 to isoleucine 285 traverse the membrane as a helical segment. Over tyrosine 286–asparagine 302 the chain is Cytoplasmic. The chain crosses the membrane as a helical span at residues methionine 303–phenylalanine 323. The Extracellular portion of the chain corresponds to tyrosine 324–leucine 341. A helical transmembrane segment spans residues isoleucine 342–phenylalanine 362. Residues proline 363–histidine 383 lie on the Cytoplasmic side of the membrane. A helical transmembrane segment spans residues valine 384–isoleucine 404. The Extracellular segment spans residues arginine 405–aspartate 406. A helical membrane pass occupies residues isoleucine 407–phenylalanine 427. The Cytoplasmic portion of the chain corresponds to tyrosine 428–glutamine 446. Residues alanine 447–alanine 467 traverse the membrane as a helical segment. Over asparagine 468 to histidine 479 the chain is Extracellular.

It belongs to the amino acid/polyamine transporter 2 family. As to expression, expressed in the ganglion cell layer and the nerve fiber layer (at protein level). Also expreseed in the cells of the inner nuclear layer and in the inner plexiform layer (at protein level). Expressed in Mueller and ganglion retinal cell.

The protein localises to the cell membrane. It catalyses the reaction L-glutamine(out) + Na(+)(out) + H(+)(in) = L-glutamine(in) + Na(+)(in) + H(+)(out). The catalysed reaction is L-serine(out) + Na(+)(out) + H(+)(in) = L-serine(in) + Na(+)(in) + H(+)(out). The enzyme catalyses L-alanine(out) + Na(+)(out) + H(+)(in) = L-alanine(in) + Na(+)(in) + H(+)(out). It carries out the reaction glycine(out) + Na(+)(out) + H(+)(in) = glycine(in) + Na(+)(in) + H(+)(out). It catalyses the reaction L-asparagine(out) + Na(+)(out) + H(+)(in) = L-asparagine(in) + Na(+)(in) + H(+)(out). The catalysed reaction is L-histidine(out) + Na(+)(out) + H(+)(in) = L-histidine(in) + Na(+)(in) + H(+)(out). The enzyme catalyses L-cysteine(out) + Na(+)(out) + H(+)(in) = L-cysteine(in) + Na(+)(in) + H(+)(out). Not inhibited by lithium. Partial allosteric regulation on ions sodium binding. Symporter that cotransports neutral amino acids and sodium ions, coupled to an H(+) antiporter activity. Releases L-glutamine and glycine from astroglial cells and may participate in the glutamate/GABA-L-glutamine cycle and the NMDA receptors activation. In addition, contributes significantly to L-glutamine uptake in retina, namely in ganglion and Mueller cells therefore, participates in the retinal glutamate-glutamine cycle. The transport activity is pH sensitive, Li(+) tolerant, bidirectional and associated with large uncoupled fluxes of protons. Moreover functions in both direction and is associated with large uncoupled fluxes of protons. The transport is electroneutral coupled to the cotransport of 1 Na(+) and the antiport of 1 H(+). May have a particular importance for modulation of net hepatic glutamine flux. This Mus musculus (Mouse) protein is Sodium-coupled neutral amino acid transporter 5.